A 246-amino-acid polypeptide reads, in one-letter code: Carboxy-S-adenosyl-L-methionine synthase (246 aa).

Residues Tyr39, 64–66 (GCS), 89–90 (DN), 121–122 (DI), Asn136, and Arg203 each bind S-adenosyl-L-methionine.

The protein belongs to the class I-like SAM-binding methyltransferase superfamily. Cx-SAM synthase family. Homodimer.

It carries out the reaction prephenate + S-adenosyl-L-methionine = carboxy-S-adenosyl-L-methionine + 3-phenylpyruvate + H2O. Functionally, catalyzes the conversion of S-adenosyl-L-methionine (SAM) to carboxy-S-adenosyl-L-methionine (Cx-SAM). The sequence is that of Carboxy-S-adenosyl-L-methionine synthase from Pseudomonas aeruginosa (strain UCBPP-PA14).